Consider the following 437-residue polypeptide: Nicotinate phosphoribosyltransferase (437 aa).

His-231 is subject to Phosphohistidine; by autocatalysis.

The protein belongs to the NAPRTase family. Transiently phosphorylated on a His residue during the reaction cycle. Phosphorylation strongly increases the affinity for substrates and increases the rate of nicotinate D-ribonucleotide production. Dephosphorylation regenerates the low-affinity form of the enzyme, leading to product release.

The enzyme catalyses nicotinate + 5-phospho-alpha-D-ribose 1-diphosphate + ATP + H2O = nicotinate beta-D-ribonucleotide + ADP + phosphate + diphosphate. Its pathway is cofactor biosynthesis; NAD(+) biosynthesis; nicotinate D-ribonucleotide from nicotinate: step 1/1. Functionally, catalyzes the synthesis of beta-nicotinate D-ribonucleotide from nicotinate and 5-phospho-D-ribose 1-phosphate at the expense of ATP. The chain is Nicotinate phosphoribosyltransferase from Vibrio vulnificus (strain YJ016).